We begin with the raw amino-acid sequence, 208 residues long: FMN-dependent NADH:quinone oxidoreductase (208 aa).

Residues 17 to 19, 99 to 102, and 143 to 146 each bind FMN; these read SNS, MWNL, and SRGG.

It belongs to the azoreductase type 1 family. Homodimer. Requires FMN as cofactor.

It catalyses the reaction 2 a quinone + NADH + H(+) = 2 a 1,4-benzosemiquinone + NAD(+). It carries out the reaction N,N-dimethyl-1,4-phenylenediamine + anthranilate + 2 NAD(+) = 2-(4-dimethylaminophenyl)diazenylbenzoate + 2 NADH + 2 H(+). Quinone reductase that provides resistance to thiol-specific stress caused by electrophilic quinones. In terms of biological role, also exhibits azoreductase activity. Catalyzes the reductive cleavage of the azo bond in aromatic azo compounds to the corresponding amines. This Staphylococcus haemolyticus (strain JCSC1435) protein is FMN-dependent NADH:quinone oxidoreductase.